The primary structure comprises 98 residues: MSDPKPTRSQGDLAETLELLLDKGVVVNADIAVSVGDTELLGVELRAAIASFETAAEYGLDFPTGTDMERVTAAAGVDADDSKSVLERPDPPTTEGSE.

The tract at residues 75–98 is disordered; that stretch reads AGVDADDSKSVLERPDPPTTEGSE. The segment covering 80–90 has biased composition (basic and acidic residues); that stretch reads DDSKSVLERPD.

It belongs to the gas vesicle GvpA family. As to quaternary structure, gvpF to GvpM interact with each other in vitro, and may form multi-subunit complex(es). Interacts with GvpA.

It localises to the gas vesicle. Its function is as follows. A minor component of the gas vesicle. Proteins GvpF to GvpM might be involved in nucleating gas vesicle formation. Gas vesicles are hollow, gas filled proteinaceous nanostructures found in several microbial planktonic microorganisms. They allow positioning of halobacteria at the optimal depth for growth in the poorly aerated, shallow brine pools of their habitat. Functionally, expression of 2 c-vac DNA fragments containing 2 divergently transcribed regions (gvpE-gvpF-gvpG-gvpH-gvpI-gvpJ-gvpK-gvpL-gvpM and gvpA-gvpC-gvpN-gvpO) allows H.volcanii to produce gas vesicles. This Halobacterium salinarum (strain ATCC 700922 / JCM 11081 / NRC-1) (Halobacterium halobium) protein is Gas vesicle protein J2.